The following is a 342-amino-acid chain: MAVTAAQVKELREKTGAGIMDAKRALVETDGNMEAAAELLREKGIAKAAKKADRVAAEGLTGIAVNGNVAAIVELNSETDFVAKNDQFVALVKETAELIASKKPATNEEALALETASGITLEAELVQATATIGEKITFRRFAVIEKTDAQHFGAYQHNGGKIGVVSVVEGADETLAKQVSMHIAAMNPTVLSADELDSEFVKAELAQMNHKIDEDNASRVLVNKPELPHHEFGSKSQLTEEVLAAAKASFEEELKAEGKPEKIWDKILPGKMAKFIVDNTKVDQQFALLAQLYIMDDSKTVEAFLESKGAKAIAFTRFEVGEGIEKAETDFAAEVEAAKAGL.

An involved in Mg(2+) ion dislocation from EF-Tu region spans residues 79–82 (TDFV).

The protein belongs to the EF-Ts family.

It is found in the cytoplasm. Associates with the EF-Tu.GDP complex and induces the exchange of GDP to GTP. It remains bound to the aminoacyl-tRNA.EF-Tu.GTP complex up to the GTP hydrolysis stage on the ribosome. In Lactococcus lactis subsp. lactis (strain IL1403) (Streptococcus lactis), this protein is Elongation factor Ts (tsf).